The sequence spans 417 residues: Calreticulin (417 aa).

Positions M1–A17 are cleaved as a signal peptide. The tract at residues E18–E197 is N-domain. Q26 serves as a coordination point for Ca(2+). Position 48 is an N6-acetyllysine (K48). Ca(2+) contacts are provided by K62 and K64. An N6-(2-hydroxyisobutyryl)lysine modification is found at K64. Residues C105 and C137 are joined by a disulfide bond. Residues Y109, K111, Y128, and D135 each coordinate an alpha-D-glucoside. K159 is subject to N6-acetyllysine. A 1-1 repeat occupies V191 to F202. Residues V191–E255 are 4 X approximate repeats. The disordered stretch occupies residues S193 to R278. A P-domain region spans residues D198–Y308. Over residues K207 to E251 the composition is skewed to basic and acidic residues. Residue K209 is modified to N6-acetyllysine. Repeat copies occupy residues D210–E221, D227–K238, D244–E255, G259–P269, G273–P283, and G287–P297. The interaction with PPIB stretch occupies residues D237–E270. Acidic residues predominate over residues D252–W261. The interval G259–P297 is 3 X approximate repeats. The tract at residues D309 to L417 is C-domain. Position 317 (D317) interacts with an alpha-D-glucoside. Residue D328 coordinates Ca(2+). N344 is a glycosylation site (N-linked (GlcNAc...) asparagine). Residues T350–L417 form a disordered region. The span at A352–E379 shows a compositional bias: basic and acidic residues. Acidic residues predominate over residues E380–V409. The Prevents secretion from ER motif lies at K414 to L417.

This sequence belongs to the calreticulin family. In terms of assembly, monomer. Component of an EIF2 complex at least composed of CELF1/CUGBP1, CALR, CALR3, EIF2S1, EIF2S2, HSP90B1 and HSPA5. Interacts with PDIA3/ERp57 and SPACA9. Interacts with TRIM21. Interacts with NR3C1. Interacts with PPIB. Interacts (via P-domain) with PDIA5. Interacts with GABARAP. Interacts with HLA-E-B2M and HLA-G-B2M complexes. Interacts with HLA-F. Interacts with CLCC1.

It localises to the endoplasmic reticulum lumen. It is found in the cytoplasm. The protein resides in the cytosol. The protein localises to the secreted. Its subcellular location is the extracellular space. It localises to the extracellular matrix. It is found in the cell surface. The protein resides in the sarcoplasmic reticulum lumen. The protein localises to the cytoplasmic vesicle. Its subcellular location is the secretory vesicle. It localises to the cortical granule. It is found in the cytolytic granule. Its function is as follows. Calcium-binding chaperone that promotes folding, oligomeric assembly and quality control in the endoplasmic reticulum (ER) via the calreticulin/calnexin cycle. This lectin interacts transiently with almost all of the monoglucosylated glycoproteins that are synthesized in the ER. Interacts with the DNA-binding domain of NR3C1 and mediates its nuclear export. Involved in maternal gene expression regulation. May participate in oocyte maturation via the regulation of calcium homeostasis. Present in the cortical granules of non-activated oocytes, is exocytosed during the cortical reaction in response to oocyte activation and might participate in the block to polyspermy. The protein is Calreticulin of Homo sapiens (Human).